A 94-amino-acid chain; its full sequence is Neutrophil defensin 1 (94 aa).

The N-terminal stretch at 1 to 19 (MRTLAILAAILLVALQAQA) is a signal peptide. The propeptide occupies 20–38 (EPLQARADEVAAAPEQIAA). Cystine bridges form between C66–C94, C68–C83, and C73–C93. R78 is subject to ADP-ribosylarginine; by ART1. Y85 carries the phosphotyrosine modification. The residue at position 88 (R88) is an ADP-ribosylarginine; by ART1.

The protein belongs to the alpha-defensin family. As to quaternary structure, tetramer. Dimer. Interacts with RETN. (Microbial infection) Interacts with HIV-1 surface protein gp120. In terms of assembly, (Microbial infection) Interacts with herpes virus 1 (HHV1) envelope glycoprotein B; this interaction inhibits viral infection. ADP-ribosylation drastically reduces cytotoxic and antibacterial activities, and enhances IL8 production. Post-translationally, phosphorylation at Tyr-85 has been found in some cancer cell lines, and interferes with ADP-ribosylation.

The protein localises to the secreted. Its function is as follows. Effector molecule of the innate immune system that acts via antibiotic-like properties against a broad array of infectious agents including bacteria, fungi, and viruses or by promoting the activation and maturation of some APCs. Interacts with the essential precursor of cell wall synthesis lipid II to inhibit bacterial cell wall synthesis. Inhibits adenovirus infection via inhibition of viral disassembly at the vertex region, thereby restricting the release of internal capsid protein pVI, which is required for endosomal membrane penetration during cell entry. In addition, interaction with adenovirus capsid leads to the redirection of viral particles to TLR4 thereby promoting a NLRP3-mediated inflammasome response and interleukin 1-beta (IL-1beta) release. Induces the production of proinflammatory cytokines including type I interferon (IFN) in plasmacytoid dendritic cells (pDCs) by triggering the degradation of NFKBIA and nuclear translocation of IRF1, both of which are required for activation of pDCs. In Homo sapiens (Human), this protein is Neutrophil defensin 1 (DEFA1).